The following is a 186-amino-acid chain: Ribosome-recycling factor (186 aa).

Belongs to the RRF family.

The protein resides in the cytoplasm. In terms of biological role, responsible for the release of ribosomes from messenger RNA at the termination of protein biosynthesis. May increase the efficiency of translation by recycling ribosomes from one round of translation to another. The chain is Ribosome-recycling factor from Bartonella bacilliformis (strain ATCC 35685 / KC583 / Herrer 020/F12,63).